The sequence spans 294 residues: Probable 2-(5''-triphosphoribosyl)-3'-dephosphocoenzyme-A synthase (294 aa).

It belongs to the CitG/MdcB family.

The enzyme catalyses 3'-dephospho-CoA + ATP = 2'-(5''-triphospho-alpha-D-ribosyl)-3'-dephospho-CoA + adenine. This chain is Probable 2-(5''-triphosphoribosyl)-3'-dephosphocoenzyme-A synthase, found in Streptococcus pyogenes serotype M2 (strain MGAS10270).